The chain runs to 523 residues: Chitinase Chi52 (523 aa).

Residues methionine 1–alanine 30 form the signal peptide. The interval glycine 80–serine 101 is disordered. Positions valine 95–glycine 180 constitute a Fibronectin type-III domain. In terms of domain architecture, GH18 spans lysine 190–leucine 513. Catalysis depends on glutamate 302, which acts as the Proton donor.

It belongs to the glycosyl hydrolase 18 family. Chitinase class II subfamily.

The catalysed reaction is Random endo-hydrolysis of N-acetyl-beta-D-glucosaminide (1-&gt;4)-beta-linkages in chitin and chitodextrins.. Activity is inhibited by Cu(2+) and Co(2+), and almost completely inhibited by SDS. Functionally, acidic chitinase that displays a broad substrate specificity, showing the highest specific activity toward colloidal chitin, followed by ethylene glycol chitin and ball milled chitin, but exhibits no activity toward powdery chitin and chitosan. Hydrolyzes colloidal chitin and chitooligosaccharides with degree of polymerization 2-5 to release mainly N-acetyl chitobiose. Displays inhibition effects on the growth of some phytopathogenic fungi, including Alternaria alstroemeriae, Botrytis cinerea, Rhizoctonia solani, Sclerotinia sclerotiorum and Valsa mali. The chain is Chitinase Chi52 from Paenibacillus xylanexedens.